Here is a 290-residue protein sequence, read N- to C-terminus: Expansin-A26 (290 aa).

A signal peptide spans 1 to 29 (MDTTTTMAPLPLLTTTSLLLFFFLASSFA). The segment at 45–67 (DGGGDGEGGGGGDGEGGGGGGGA) is disordered. Positions 101–196 (GGACGYKDAD…RKVACVRQGG (96 aa)) constitute an Expansin-like EG45 domain. One can recognise an Expansin-like CBD domain in the interval 206-286 (SYNMVMVKNV…DWTYDNTYQA (81 aa)). Asn-250 carries N-linked (GlcNAc...) asparagine glycosylation.

It belongs to the expansin family. Expansin A subfamily. As to expression, expressed in flowers.

Its subcellular location is the secreted. It localises to the cell wall. The protein resides in the membrane. May cause loosening and extension of plant cell walls by disrupting non-covalent bonding between cellulose microfibrils and matrix glucans. No enzymatic activity has been found. May be required for rapid internodal elongation in deepwater rice during submergence. The protein is Expansin-A26 (EXPA26) of Oryza sativa subsp. japonica (Rice).